The following is a 94-amino-acid chain: ESAT-6-like protein EsxL (94 aa).

Belongs to the WXG100 family. ESAT-6 subfamily. Strongly interacts with EsxK to form a heterodimeric complex under reducing conditions.

Its subcellular location is the secreted. This is ESAT-6-like protein EsxL from Mycobacterium tuberculosis (strain CDC 1551 / Oshkosh).